Consider the following 1151-residue polypeptide: Elicitor of plant defense protein 1 (1151 aa).

Disordered regions lie at residues 22-130 (YQDP…TLGE), 178-197 (ERIR…RSIK), and 236-255 (NYNS…DMHP). Residues 39–49 (IIEDGEPEDEW) show a composition bias toward acidic residues. Positions 64 to 99 (QNSASRLSKMSLTERFSIQTLDDTDGNTKSNRSSAT) are enriched in polar residues. A compositionally biased stretch (low complexity) spans 104–122 (NPPDFSNGNDDSNGNSQNP). The span at 178–187 (ERIRAEESDS) shows a compositional bias: basic and acidic residues. A uDENN domain is found at 242–500 (PPPEPLNTDP…NLCTEAFNPL (259 aa)). Residues 524-656 (EIPGSRTIDI…ARRKLMSLLQ (133 aa)) form the cDENN domain. The dDENN domain occupies 658-1019 (AAPHKLRYGV…DREMQPANDA (362 aa)). Composition is skewed to polar residues over residues 695-711 (STPK…SSSG) and 744-760 (TSKS…SPVS). The segment at 695–809 (STPKSTLGKW…SSSFGVDKHP (115 aa)) is disordered. The segment covering 784–798 (LREKRSGHFGEEKMR) has biased composition (basic and acidic residues). The Phorbol-ester/DAG-type zinc-finger motif lies at 886–934 (GHCFNYMPKDNTSMCTICNDLAEGDGVYRCTGCKIVSHGRCLGYCSLIC).

The protein belongs to the EPD1 elicitor family.

The protein localises to the secreted. Its subcellular location is the host cell. Functionally, acts as an elicitor that triggers cell death and defense responses in the host plants. The protein is Elicitor of plant defense protein 1 of Gibberella zeae (strain ATCC MYA-4620 / CBS 123657 / FGSC 9075 / NRRL 31084 / PH-1) (Wheat head blight fungus).